Reading from the N-terminus, the 340-residue chain is tRNA-specific 2-thiouridylase MnmA (340 aa).

ATP-binding positions include 6–13 (AMSGGVDS) and Met-32. Cys-92 acts as the Nucleophile in catalysis. A disulfide bridge connects residues Cys-92 and Cys-186. Gly-116 is an ATP binding site. Positions 134-136 (KDQ) are interaction with tRNA. Cys-186 acts as the Cysteine persulfide intermediate in catalysis. The interaction with tRNA stretch occupies residues 288-289 (RY).

It belongs to the MnmA/TRMU family.

It is found in the cytoplasm. It carries out the reaction S-sulfanyl-L-cysteinyl-[protein] + uridine(34) in tRNA + AH2 + ATP = 2-thiouridine(34) in tRNA + L-cysteinyl-[protein] + A + AMP + diphosphate + H(+). Catalyzes the 2-thiolation of uridine at the wobble position (U34) of tRNA, leading to the formation of s(2)U34. The sequence is that of tRNA-specific 2-thiouridylase MnmA from Campylobacter concisus (strain 13826).